The chain runs to 529 residues: Variant surface glycoprotein MITAT 1.6 (529 aa).

An N-terminal signal peptide occupies residues 1–24 (MAVHRALAAYAISLYVLLPRKSGA). Intrachain disulfides connect Cys-39-Cys-170 and Cys-147-Cys-214. Residue Asn-456 is glycosylated (N-linked (GlcNAc...) (high mannose) asparagine). A lipid anchor (GPI-anchor amidated aspartate) is attached at Asp-506. Residues 507-529 (SSILVTKKFALTVVSAAFVALLF) constitute a propeptide, removed in mature form.

In terms of processing, N-glycosylated; glycan is composed of 6 to 9 mannose residues.

It localises to the cell membrane. VSG forms a coat on the surface of the parasite. The trypanosome evades the immune response of the host by expressing a series of antigenically distinct VSGs from an estimated 1000 VSG genes. In Trypanosoma brucei brucei, this protein is Variant surface glycoprotein MITAT 1.6.